The primary structure comprises 333 residues: Beta-ketoacyl-[acyl-carrier-protein] synthase III (333 aa).

Residues Cys-122 and His-258 contribute to the active site. The interval 259 to 263 (QANER) is ACP-binding. Asn-289 is a catalytic residue.

Belongs to the thiolase-like superfamily. FabH family. In terms of assembly, homodimer.

The protein resides in the cytoplasm. The enzyme catalyses butanoyl-CoA + malonyl-[ACP] + H(+) = 3-oxohexanoyl-[ACP] + CO2 + CoA. It catalyses the reaction malonyl-[ACP] + acetyl-CoA + H(+) = 3-oxobutanoyl-[ACP] + CO2 + CoA. It carries out the reaction 2-methylpropanoyl-CoA + malonyl-[ACP] + H(+) = 4-methyl-3-oxopentanoyl-[ACP] + CO2 + CoA. The protein operates within lipid metabolism; fatty acid biosynthesis. With respect to regulation, inhibited by thiolactomycin. Functionally, catalyzes the condensation reaction of fatty acid synthesis by the addition to an acyl acceptor of two carbons from malonyl-ACP. Catalyzes the first condensation reaction which initiates fatty acid synthesis and may therefore play a role in governing the total rate of fatty acid production. Possesses both acetoacetyl-ACP synthase and acetyl transacylase activities. Utilizes both straight and branched-chain acyl-CoAs. The order of reactivity with the various acyl-CoA substrates at saturation is butanoyl-CoA &gt; acetyl-CoA &gt; 2-methylpropanoyl-CoA (or isobutyryl-CoA). Not involved in tetracenomycin C (TCM C) biosynthesis. This is Beta-ketoacyl-[acyl-carrier-protein] synthase III (fabH) from Streptomyces glaucescens.